The primary structure comprises 225 residues: 7-cyano-7-deazaguanine synthase (225 aa).

9-19 (YSGGLDSTTCL) contributes to the ATP binding site. Residues C188, C198, C201, and C204 each contribute to the Zn(2+) site.

This sequence belongs to the QueC family. Requires Zn(2+) as cofactor.

It catalyses the reaction 7-carboxy-7-deazaguanine + NH4(+) + ATP = 7-cyano-7-deazaguanine + ADP + phosphate + H2O + H(+). It participates in purine metabolism; 7-cyano-7-deazaguanine biosynthesis. Catalyzes the ATP-dependent conversion of 7-carboxy-7-deazaguanine (CDG) to 7-cyano-7-deazaguanine (preQ(0)). The chain is 7-cyano-7-deazaguanine synthase from Geobacter sp. (strain M21).